We begin with the raw amino-acid sequence, 398 residues long: tRNA (guanine-N(7)-)-methyltransferase (398 aa).

S-adenosyl-L-methionine-binding residues include Glu-124, Glu-149, and Asp-176. A substrate-binding site is contributed by Asp-232.

The protein belongs to the class I-like SAM-binding methyltransferase superfamily. TrmB family.

The enzyme catalyses guanosine(46) in tRNA + S-adenosyl-L-methionine = N(7)-methylguanosine(46) in tRNA + S-adenosyl-L-homocysteine. It functions in the pathway tRNA modification; N(7)-methylguanine-tRNA biosynthesis. In terms of biological role, catalyzes the formation of N(7)-methylguanine at position 46 (m7G46) in tRNA. The chain is tRNA (guanine-N(7)-)-methyltransferase from Helicobacter acinonychis (strain Sheeba).